The following is a 430-amino-acid chain: Trigger factor (430 aa).

Residues 157 to 242 form the PPIase FKBP-type domain; it reads GDLVALETWS…AVEVSEPVLP (86 aa).

Belongs to the FKBP-type PPIase family. Tig subfamily.

Its subcellular location is the cytoplasm. The catalysed reaction is [protein]-peptidylproline (omega=180) = [protein]-peptidylproline (omega=0). Involved in protein export. Acts as a chaperone by maintaining the newly synthesized protein in an open conformation. Functions as a peptidyl-prolyl cis-trans isomerase. The polypeptide is Trigger factor (Xanthomonas oryzae pv. oryzae (strain MAFF 311018)).